The chain runs to 188 residues: uncharacterized protein (188 aa).

This is an uncharacterized protein from Methanocaldococcus jannaschii (strain ATCC 43067 / DSM 2661 / JAL-1 / JCM 10045 / NBRC 100440) (Methanococcus jannaschii).